Here is a 232-residue protein sequence, read N- to C-terminus: Ubiquinone biosynthesis O-methyltransferase (232 aa).

Positions 36, 55, 76, and 120 each coordinate S-adenosyl-L-methionine.

The protein belongs to the methyltransferase superfamily. UbiG/COQ3 family.

It carries out the reaction a 3-demethylubiquinol + S-adenosyl-L-methionine = a ubiquinol + S-adenosyl-L-homocysteine + H(+). The enzyme catalyses a 3-(all-trans-polyprenyl)benzene-1,2-diol + S-adenosyl-L-methionine = a 2-methoxy-6-(all-trans-polyprenyl)phenol + S-adenosyl-L-homocysteine + H(+). The protein operates within cofactor biosynthesis; ubiquinone biosynthesis. Its function is as follows. O-methyltransferase that catalyzes the 2 O-methylation steps in the ubiquinone biosynthetic pathway. The protein is Ubiquinone biosynthesis O-methyltransferase of Stutzerimonas stutzeri (strain A1501) (Pseudomonas stutzeri).